A 182-amino-acid chain; its full sequence is Ribosome-recycling factor (182 aa).

Residues 136–160 (VKKSEKDGDLSEDQSRDEQETIQKE) are disordered.

The protein belongs to the RRF family.

It is found in the cytoplasm. In terms of biological role, responsible for the release of ribosomes from messenger RNA at the termination of protein biosynthesis. May increase the efficiency of translation by recycling ribosomes from one round of translation to another. The protein is Ribosome-recycling factor of Prochlorococcus marinus (strain NATL2A).